A 200-amino-acid polypeptide reads, in one-letter code: 3-isopropylmalate dehydratase small subunit (200 aa).

Belongs to the LeuD family. LeuD type 1 subfamily. As to quaternary structure, heterodimer of LeuC and LeuD.

It carries out the reaction (2R,3S)-3-isopropylmalate = (2S)-2-isopropylmalate. It functions in the pathway amino-acid biosynthesis; L-leucine biosynthesis; L-leucine from 3-methyl-2-oxobutanoate: step 2/4. Functionally, catalyzes the isomerization between 2-isopropylmalate and 3-isopropylmalate, via the formation of 2-isopropylmaleate. In Edwardsiella ictaluri (strain 93-146), this protein is 3-isopropylmalate dehydratase small subunit.